Consider the following 301-residue polypeptide: Pantothenate synthetase (301 aa).

Residue 30–37 (MGNLHEGH) participates in ATP binding. Histidine 37 acts as the Proton donor in catalysis. Glutamine 61 is a (R)-pantoate binding site. Glutamine 61 provides a ligand contact to beta-alanine. Residue 149 to 152 (GEKD) coordinates ATP. A (R)-pantoate-binding site is contributed by glutamine 155. ATP contacts are provided by residues valine 178 and 186–189 (MSSR).

The protein belongs to the pantothenate synthetase family. Homodimer.

The protein localises to the cytoplasm. The enzyme catalyses (R)-pantoate + beta-alanine + ATP = (R)-pantothenate + AMP + diphosphate + H(+). It functions in the pathway cofactor biosynthesis; (R)-pantothenate biosynthesis; (R)-pantothenate from (R)-pantoate and beta-alanine: step 1/1. Catalyzes the condensation of pantoate with beta-alanine in an ATP-dependent reaction via a pantoyl-adenylate intermediate. The chain is Pantothenate synthetase from Vibrio vulnificus (strain CMCP6).